The primary structure comprises 63 residues: Large ribosomal subunit protein bL28 (63 aa).

This sequence belongs to the bacterial ribosomal protein bL28 family.

This chain is Large ribosomal subunit protein bL28, found in Clostridium perfringens (strain ATCC 13124 / DSM 756 / JCM 1290 / NCIMB 6125 / NCTC 8237 / Type A).